The chain runs to 197 residues: MRSRTSVLTSSLAFLYFFGIVGRSALAMEETPASSMNLQHYNNMLNPMVFDDTMPEKRAYTYVSEYKRLPVYNFGIGKRWIDTNDNKRGRDYSFGLGKRRQYSFGLGKRNDNADYPLRLNLDYLPVDNPAFHSQENTDDFLEEKRGRQPYSFGLGKRAVHYSGGQPLGSKRPNDMLSQRYHFGLGKRMSEDEEESSQ.

The N-terminal stretch at methionine 1–alanine 27 is a signal peptide. Residues methionine 28–glutamate 56 constitute a propeptide that is removed on maturation. Residue isoleucine 76 is modified to Isoleucine amide. The propeptide occupies tryptophan 80–asparagine 86. A leucine amide mark is found at leucine 96, leucine 106, leucine 154, and leucine 184. Residues tyrosine 161–glutamine 197 are disordered. A propeptide spanning residues methionine 188–glutamine 197 is cleaved from the precursor.

It belongs to the allatostatin family.

The protein localises to the secreted. In terms of biological role, neuropeptides. The protein is Allatostatins of Apis mellifera (Honeybee).